The following is a 481-amino-acid chain: Alpha-L-arabinofuranosidase 43 (481 aa).

A signal peptide spans 1–19 (MRFSVFTAAIAAAFSACCA). N-linked (GlcNAc...) asparagine glycosylation is found at Asn-158, Asn-176, and Asn-365.

The protein belongs to the glycosyl hydrolase 43 family.

Its subcellular location is the secreted. It catalyses the reaction Hydrolysis of terminal non-reducing alpha-L-arabinofuranoside residues in alpha-L-arabinosides.. Activity is significantly inhibited by SDS and partially inhibited by Ag(+), Fe(3+) and beta-mercaptoethanol. Its function is as follows. Alpha-L-arabinofuranosidase specific for the cleavage of alpha-1,3-linkage. Shows high activity against 4-nitrophenyl alpha-L-arabinofuranoside, debranched arabinan, and sugar beet arabinan. This Humicola insolens (Soft-rot fungus) protein is Alpha-L-arabinofuranosidase 43.